We begin with the raw amino-acid sequence, 235 residues long: Probable transcriptional regulatory protein Ccur92_05350 (235 aa).

This sequence belongs to the TACO1 family.

Its subcellular location is the cytoplasm. This chain is Probable transcriptional regulatory protein Ccur92_05350, found in Campylobacter curvus (strain 525.92).